We begin with the raw amino-acid sequence, 434 residues long: Ribonuclease T2-like (434 aa).

The first 18 residues, 1–18 (MLLKNLHSLLQLPIFSNG), serve as a signal peptide directing secretion. Intrachain disulfides connect Cys-27–Cys-46, Cys-35–Cys-94, Cys-45–Cys-171, Cys-102–Cys-163, and Cys-241–Cys-277. 2 N-linked (GlcNAc...) asparagine glycosylation sites follow: Asn-37 and Asn-70. Residue His-87 is part of the active site. N-linked (GlcNAc...) asparagine glycans are attached at residues Asn-103 and Asn-123. Active-site residues include Glu-156 and His-160.

The protein belongs to the RNase T2 family. Post-translationally, N-glycosylated.

It is found in the vacuole lumen. It localises to the cytoplasm. It carries out the reaction a ribonucleotidyl-ribonucleotide-RNA + H2O = a 3'-end 3'-phospho-ribonucleotide-RNA + a 5'-end dephospho-ribonucleoside-RNA + H(+). Functionally, rnase which modulates cell survival under stress conditions. Released from the vacuole to the cytoplasm during stress to promote tRNA and rRNA cleavage and to activate separately a downstream pathway that promotes cell death. Involved in cell size, vacuolar morphology and growth at high temperatures and high salt concentration. The chain is Ribonuclease T2-like (RNY1) from Saccharomyces cerevisiae (strain ATCC 204508 / S288c) (Baker's yeast).